The chain runs to 475 residues: Ribulose bisphosphate carboxylase large chain (475 aa).

Residues 1–2 (MS) constitute a propeptide that is removed on maturation. The residue at position 3 (Pro3) is an N-acetylproline. Residue Lys14 is modified to N6,N6,N6-trimethyllysine. The substrate site is built by Asn123 and Thr173. Lys175 functions as the Proton acceptor in the catalytic mechanism. Residue Lys177 participates in substrate binding. 3 residues coordinate Mg(2+): Lys201, Asp203, and Glu204. Residue Lys201 is modified to N6-carboxylysine. His294 functions as the Proton acceptor in the catalytic mechanism. Substrate-binding residues include Arg295, His327, and Ser379.

Belongs to the RuBisCO large chain family. Type I subfamily. In terms of assembly, heterohexadecamer of 8 large chains and 8 small chains; disulfide-linked. The disulfide link is formed within the large subunit homodimers. Mg(2+) is required as a cofactor. The disulfide bond which can form in the large chain dimeric partners within the hexadecamer appears to be associated with oxidative stress and protein turnover.

The protein localises to the plastid. It is found in the chloroplast. The catalysed reaction is 2 (2R)-3-phosphoglycerate + 2 H(+) = D-ribulose 1,5-bisphosphate + CO2 + H2O. It carries out the reaction D-ribulose 1,5-bisphosphate + O2 = 2-phosphoglycolate + (2R)-3-phosphoglycerate + 2 H(+). In terms of biological role, ruBisCO catalyzes two reactions: the carboxylation of D-ribulose 1,5-bisphosphate, the primary event in carbon dioxide fixation, as well as the oxidative fragmentation of the pentose substrate in the photorespiration process. Both reactions occur simultaneously and in competition at the same active site. The sequence is that of Ribulose bisphosphate carboxylase large chain from Staurastrum punctulatum (Green alga).